Consider the following 274-residue polypeptide: Large ribosomal subunit protein uL2 (274 aa).

Residues 222 to 274 (GVAMNPVDHPHGGGEGRGKGHHPQSPWGQLAKGYKTRRGKKASDKLIVRRRNG) form a disordered region. Positions 229 to 239 (DHPHGGGEGRG) are enriched in basic and acidic residues.

The protein belongs to the universal ribosomal protein uL2 family. Part of the 50S ribosomal subunit. Forms a bridge to the 30S subunit in the 70S ribosome.

In terms of biological role, one of the primary rRNA binding proteins. Required for association of the 30S and 50S subunits to form the 70S ribosome, for tRNA binding and peptide bond formation. It has been suggested to have peptidyltransferase activity; this is somewhat controversial. Makes several contacts with the 16S rRNA in the 70S ribosome. This chain is Large ribosomal subunit protein uL2, found in Thermosipho melanesiensis (strain DSM 12029 / CIP 104789 / BI429).